The primary structure comprises 323 residues: L-lactate dehydrogenase (323 aa).

Residues Val-11, Asp-32, and Tyr-63 each contribute to the NAD(+) site. The substrate site is built by Gln-80 and Arg-86. NAD(+) is bound by residues Ser-99, 116–118 (VSN), and Ser-141. Position 118–121 (118–121 (NPVD)) interacts with substrate. 146 to 149 (DTAR) lines the substrate pocket. The beta-D-fructose 1,6-bisphosphate site is built by Arg-151 and His-166. The active-site Proton acceptor is His-173. Tyr-221 is modified (phosphotyrosine). Thr-230 provides a ligand contact to substrate.

The protein belongs to the LDH/MDH superfamily. LDH family. Homotetramer.

The protein localises to the cytoplasm. It carries out the reaction (S)-lactate + NAD(+) = pyruvate + NADH + H(+). Its pathway is fermentation; pyruvate fermentation to lactate; (S)-lactate from pyruvate: step 1/1. Its activity is regulated as follows. Allosterically activated by fructose 1,6-bisphosphate (FBP). In terms of biological role, catalyzes the conversion of lactate to pyruvate. The sequence is that of L-lactate dehydrogenase from Kosmotoga olearia (strain ATCC BAA-1733 / DSM 21960 / TBF 19.5.1).